Here is a 118-residue protein sequence, read N- to C-terminus: Holo-[acyl-carrier-protein] synthase (118 aa).

Residues Asp8 and Glu58 each coordinate Mg(2+).

Belongs to the P-Pant transferase superfamily. AcpS family. It depends on Mg(2+) as a cofactor.

It is found in the cytoplasm. The enzyme catalyses apo-[ACP] + CoA = holo-[ACP] + adenosine 3',5'-bisphosphate + H(+). Transfers the 4'-phosphopantetheine moiety from coenzyme A to a Ser of acyl-carrier-protein. The chain is Holo-[acyl-carrier-protein] synthase from Listeria monocytogenes serotype 4a (strain HCC23).